Consider the following 385-residue polypeptide: Transcription termination factor 2, mitochondrial (385 aa).

The N-terminal 35 residues, 1–35, are a transit peptide targeting the mitochondrion; sequence MSWRLLTGYQLCRLRLFRKPQPALKIRPSSVCVTY.

Belongs to the mTERF family. As to quaternary structure, monomer.

The protein localises to the mitochondrion matrix. Its subcellular location is the mitochondrion nucleoid. In terms of biological role, binds mitochondrial DNA and plays a role in the regulation of transcription of mitochondrial mRNA and rRNA species. The sequence is that of Transcription termination factor 2, mitochondrial (Mterf2) from Rattus norvegicus (Rat).